The sequence spans 213 residues: Uracil phosphoribosyltransferase (213 aa).

5-phospho-alpha-D-ribose 1-diphosphate is bound by residues Arg-78, Arg-103, and 131–139 (DPMLATGGT). Uracil-binding positions include Ile-197 and 202-204 (GDA). Asp-203 lines the 5-phospho-alpha-D-ribose 1-diphosphate pocket.

The protein belongs to the UPRTase family. Mg(2+) is required as a cofactor.

It carries out the reaction UMP + diphosphate = 5-phospho-alpha-D-ribose 1-diphosphate + uracil. It participates in pyrimidine metabolism; UMP biosynthesis via salvage pathway; UMP from uracil: step 1/1. Allosterically activated by GTP. In terms of biological role, catalyzes the conversion of uracil and 5-phospho-alpha-D-ribose 1-diphosphate (PRPP) to UMP and diphosphate. This chain is Uracil phosphoribosyltransferase, found in Bifidobacterium longum (strain DJO10A).